The chain runs to 313 residues: Short-chain dehydrogenase/reductase family 9C member 7 (313 aa).

29-53 (FITGCDSGFGNLLARQLVDRGMRVL) is an NADP(+) binding site. Serine 160 provides a ligand contact to substrate. Tyrosine 172 functions as the Proton acceptor in the catalytic mechanism. Position 185 is a phosphoserine (serine 185).

It belongs to the short-chain dehydrogenases/reductases (SDR) family.

The protein resides in the cytoplasm. The catalysed reaction is a N-[omega-(9R,10R)-epoxy-(13R)-hydroxy-(11E)-octadecenoyloxy]acyl-beta-D-glucosyl-(1&lt;-&gt;1)-sphing-4E-enine + NAD(+) = a N-[omega-(9R,10R)-epoxy-13-oxo-(11E)-octadecenoyloxy]acyl-beta-D-glucosyl-(1&lt;-&gt;1)-sphing-4E-enine + NADH + H(+). It catalyses the reaction a N-[omega-(9R,10R)-epoxy-(13R)-hydroxy-(11E)-octadecenoyloxy]-acylsphing-4E-enine + NAD(+) = a N-[omega-(9R,10R)-epoxy-13-oxo-(11E)-octadecenoyloxy]-acylsphing-4E-enine + NADH + H(+). In terms of biological role, plays a crucial role in the formation of the epidermal permeability barrier. Catalyzes the NAD+-dependent dehydrogenation of the linoleate 9,10-trans-epoxy-11E-13-alcohol esterified in omega-O-acylceramides (such as in N-[omega-(9R,10R)-epoxy-(13R)-hydroxy-(11E)-octadecenoyloxy]-acylsphing-4E-enine) to the corresponding 13-ketone, the reactive moiety required for binding of epidermal ceramides to proteins. Displays weak conversion of all-trans-retinal to all-trans-retinol in the presence of NADH. Has apparently no steroid dehydrogenase activity. The chain is Short-chain dehydrogenase/reductase family 9C member 7 (SDR9C7) from Bos taurus (Bovine).